A 123-amino-acid chain; its full sequence is Large ribosomal subunit protein uL18 (123 aa).

It belongs to the universal ribosomal protein uL18 family. Part of the 50S ribosomal subunit; part of the 5S rRNA/L5/L18/L25 subcomplex. Contacts the 5S and 23S rRNAs.

In terms of biological role, this is one of the proteins that bind and probably mediate the attachment of the 5S RNA into the large ribosomal subunit, where it forms part of the central protuberance. The polypeptide is Large ribosomal subunit protein uL18 (Chlamydia muridarum (strain MoPn / Nigg)).